Reading from the N-terminus, the 212-residue chain is Disintegrin-like halysetin (212 aa).

The region spanning proline 4 to asparagine 90 is the Disintegrin domain. 9 disulfides stabilise this stretch: cysteine 7-cysteine 26, cysteine 18-cysteine 36, cysteine 62-cysteine 82, cysteine 69-cysteine 94, cysteine 101-cysteine 106, cysteine 113-cysteine 128, cysteine 151-cysteine 158, cysteine 163-cysteine 174, and cysteine 200-cysteine 205. Positions glutamate 68–aspartate 70 match the D/ECD-tripeptide motif.

The protein belongs to the venom metalloproteinase (M12B) family. P-III subfamily. P-IIIb sub-subfamily. In terms of assembly, monomer. As to expression, expressed by the venom gland.

Its subcellular location is the secreted. Inhibits human platelet aggregation stimulated by collagen with an IC(50) of 420 nM. This Gloydius halys (Chinese water mocassin) protein is Disintegrin-like halysetin.